The primary structure comprises 719 residues: Potassium-transporting ATPase ATP-binding subunit (719 aa).

The next 4 membrane-spanning stretches (helical) occupy residues 35–55 (LFVVELGTIIGLVMTIAPGLF), 62–82 (VYYAVITVLLGFTVIFANYAE), 228–248 (ILLSGLTLVFVVAVATMFFFG), and 254–274 (FVGGFAGLDVAELVALLVALM). The active-site 4-aspartylphosphate intermediate is the aspartate 318. 2 residues coordinate ATP: aspartate 355 and glutamate 359. A disordered region spans residues 372 to 396 (GKVQTDGGQSASEELDEPGDSVDAP). A compositionally biased stretch (polar residues) spans 373 to 383 (KVQTDGGQSAS). ATP is bound by residues 416–423 (FSAETRMS) and lysine 435. Mg(2+)-binding residues include aspartate 554 and aspartate 558. Helical transmembrane passes span 624–644 (FVLLPAILAAAIPGLGAMDIL), 652–672 (AVTATLMYNAFIIPLLIPLAL), and 698–718 (LIAPFIFIKAIDMLFVALGVF).

Belongs to the cation transport ATPase (P-type) (TC 3.A.3) family. Type IA subfamily. In terms of assembly, the system is composed of three essential subunits: KdpA, KdpB and KdpC. The complex also contains KdpF, a small non-essential subunit.

The protein localises to the cell membrane. The enzyme catalyses K(+)(out) + ATP + H2O = K(+)(in) + ADP + phosphate + H(+). In terms of biological role, part of the high-affinity ATP-driven potassium transport (or Kdp) system, which catalyzes the hydrolysis of ATP coupled with the electrogenic transport of potassium into the cytoplasm. This subunit is responsible for energy coupling to the transport system and for the release of the potassium ions to the cytoplasm. The Kdp system is essential for growth under K(+) limitation, and for survival under desiccation and salt crystal inclusion. The polypeptide is Potassium-transporting ATPase ATP-binding subunit (Halobacterium salinarum (strain ATCC 29341 / DSM 671 / R1)).